Consider the following 1356-residue polypeptide: Pleckstrin homology domain-containing family H member 1 (1356 aa).

A coiled-coil region spans residues 27–172 (FRLQASKIRE…QDALEDLRMT (146 aa)). Disordered regions lie at residues 179-203 (VVPE…EQDS), 256-314 (HLQK…PKVR), and 354-414 (LHSP…PPLH). Polar residues-rich tracts occupy residues 194–203 (PSDQPVEQDS), 256–265 (HLQKEGSPSQ), and 285–297 (VTAQ…GTKT). Residues 359–407 (SSKSEARAKVREEAEKMEMEALPPSGKQEERESLKSRRGELEDVELENK) adopt a coiled-coil conformation. 2 stretches are compositionally biased toward basic and acidic residues: residues 362-377 (SEAR…KMEM) and 385-399 (KQEE…RGEL). Position 451 is a phosphoserine (Ser451). PH domains follow at residues 572 to 666 (ALEK…SLLK) and 681 to 790 (KPTV…VAAG). The residue at position 739 (Ser739) is a Phosphoserine. In terms of domain architecture, MyTH4 spans 826–980 (YSQEGLCASL…PSRMEVVSIL (155 aa)). Residues 991 to 1327 (FSIPVHFANG…NHCSATVNLS (337 aa)) form the FERM domain.

This chain is Pleckstrin homology domain-containing family H member 1 (Plekhh1), found in Mus musculus (Mouse).